Consider the following 229-residue polypeptide: MERVMNIIKPKPDPKQLLRDWQRKLRQECRNIERQIRDIQKEERNVQKAIKEAAKRNDMVSAKALAKEIVSSRRTVNRLYENKAQMNSISMHLGESVAIARTVGHLSKSAEVMKLVNNLMKAPQMAATMQEFSKEMTKAGVIEEFVNEAIDNALDSEDMEEEIDEEVDKVLTAIAGETAAELPVAVRKERIKVPAQKASTSREEEAVAEGVDDEEELEEIRARLAKVRS.

The stretch at Lys15–Val60 forms a coiled coil. Positions Val193 to Glu215 are disordered. The segment covering Ala206–Glu215 has biased composition (acidic residues).

The protein belongs to the SNF7 family. In terms of assembly, component of the endosomal sorting required for transport complex III (ESCRT-III), composed at least of VPS2, VPS20, VPS24 and VPS32. Interacts with SKD1.

The protein resides in the endosome. Its function is as follows. Component of the ESCRT-III complex, which is required for multivesicular bodies (MVBs) formation and sorting of endosomal cargo proteins into MVBs. The ESCRT-III complex is probably involved in the concentration of MVB cargo. The protein is Vacuolar protein sorting-associated protein 24 homolog 1 (VPS24-1) of Arabidopsis thaliana (Mouse-ear cress).